The chain runs to 435 residues: Methylenetetrahydrofolate--tRNA-(uracil-5-)-methyltransferase TrmFO (435 aa).

10 to 15 lines the FAD pocket; the sequence is GAGLAG.

It belongs to the MnmG family. TrmFO subfamily. Requires FAD as cofactor.

It is found in the cytoplasm. It carries out the reaction uridine(54) in tRNA + (6R)-5,10-methylene-5,6,7,8-tetrahydrofolate + NADH + H(+) = 5-methyluridine(54) in tRNA + (6S)-5,6,7,8-tetrahydrofolate + NAD(+). The catalysed reaction is uridine(54) in tRNA + (6R)-5,10-methylene-5,6,7,8-tetrahydrofolate + NADPH + H(+) = 5-methyluridine(54) in tRNA + (6S)-5,6,7,8-tetrahydrofolate + NADP(+). In terms of biological role, catalyzes the folate-dependent formation of 5-methyl-uridine at position 54 (M-5-U54) in all tRNAs. The polypeptide is Methylenetetrahydrofolate--tRNA-(uracil-5-)-methyltransferase TrmFO (Geotalea uraniireducens (strain Rf4) (Geobacter uraniireducens)).